The chain runs to 387 residues: ERBB-3 BINDING PROTEIN 1 (387 aa).

Necessary for nucleolar localization regions lie at residues 1 to 49 (MSDD…IVDL) and 297 to 387 (LLQP…PMEG). The tract at residues 47 to 55 (VDLCEKGDA) is RNA-binding. The segment at 337–387 (LQPTKTTENEPEIKAWLALPTKTKKKGGGKKKKGKKGDKVEEASQAEPMEG) is disordered. The segment at 356–373 (PTKTKKKGGGKKKKGKKG) is interaction with RNA. Positions 358–372 (KTKKKGGGKKKKGKK) are enriched in basic residues. The Nuclear localization signal signature appears at 360 to 369 (KKKGGGKKKK).

Belongs to the peptidase M24 family. As to quaternary structure, component of a ribonucleoprotein complex. As to expression, expressed during tuberisation and in roots, nodes, internodes, petioles, leaves, stolons, tubers and sprouts.

It is found in the nucleus. In terms of biological role, binds RNA. Associates with 28S, 18S and 5.8S mature rRNAs, several rRNA precursors and probably U3 small nucleolar RNA. May be involved in regulation of intermediate and late steps of rRNA processing. May be involved in ribosome assembly. Required for expression of cell cycle genes such as CYCD3-1, RNR2A and CDKB1-1. Promotes, in a dose- and auxin-dependent manner, organ growth by stimulating both cell proliferation and expansion, via the regulation of RBR1 levels. The polypeptide is ERBB-3 BINDING PROTEIN 1 (Solanum tuberosum (Potato)).